The sequence spans 714 residues: Calpain-1 catalytic subunit (714 aa).

The region spanning L55–T354 is the Calpain catalytic domain. Q109 and D114 together coordinate Ca(2+). Active-site residues include C115, H272, and N296. Residues S316, D318, and E323 each coordinate Ca(2+). T354 carries the phosphothreonine modification. The tract at residues P355–D526 is domain III. The segment at Q527–E542 is linker. 4 consecutive EF-hand domains span residues E541–K576, F585–R618, N615–K650, and V680–A714. A domain IV region spans residues I543–F713. The Ca(2+) site is built by D598, D600, N602, K604, E609, D628, D630, S632, S634, and E639.

It belongs to the peptidase C2 family. In terms of assembly, forms a heterodimer with a small (regulatory) subunit (CAPNS1). Ca(2+) serves as cofactor. In terms of processing, undergoes calcium-induced successive autoproteolytic cleavages that generate a membrane-bound 78 kDa active form and an intracellular 75 kDa active form. Calpastatin reduces with high efficiency the transition from 78 kDa to 75 kDa calpain forms. In terms of tissue distribution, ubiquitous.

It localises to the cytoplasm. The protein resides in the cell membrane. It catalyses the reaction Broad endopeptidase specificity.. Its activity is regulated as follows. Activated by micromolar concentrations of calcium and inhibited by calpastatin. Its function is as follows. Calcium-regulated non-lysosomal thiol-protease which catalyze limited proteolysis of substrates involved in cytoskeletal remodeling and signal transduction. Proteolytically cleaves CTBP1. Cleaves and activates caspase-7 (CASP7). The protein is Calpain-1 catalytic subunit (CAPN1) of Macaca fascicularis (Crab-eating macaque).